The sequence spans 466 residues: Putative proline/betaine transporter (466 aa).

The next 12 membrane-spanning stretches (helical) occupy residues 20–42 (VVATGIGNAMEWFDFGVYAYTTA), 63–83 (FAALAIAFLLRPIGGVVFGII), 91–111 (VVLTSTIILMAFSTLTIGLLP), 116–136 (IGLWAPILLLLARVLQGFSTG), 164–184 (IGTLSGYIAASIMIAVLTFFL), 191–211 (SFGWRIPFLLGLFLGLFGLYL), 239–259 (IIRFYYIDIFVCFVAVVFFNV), 285–305 (VLITCVMAIMIPLALMFGKLA), 313–332 (VFLIGTGGLTLFSIIAFMLL), 337–354 (FVVIVIGIFILGFFLSTY), 377–397 (VTFNISVSIFGGTTPLVATWL), and 405–425 (LAPAYYLTAISVIGFLVITFL).

It belongs to the major facilitator superfamily. Metabolite:H+ Symporter (MHS) family (TC 2.A.1.6) family.

It is found in the cell membrane. Functionally, may be a proton symporter involved in the uptake of osmolytes such as proline and glycine betaine. This is Putative proline/betaine transporter (proP) from Staphylococcus aureus (strain MSSA476).